The primary structure comprises 123 residues: Thioredoxin H-type (123 aa).

A Thioredoxin domain is found at 2–119 (AATAELIPAG…IEAKLLKHSQ (118 aa)). The cysteines at positions 45 and 48 are disulfide-linked.

The protein belongs to the thioredoxin family. Plant H-type subfamily.

The protein localises to the cytoplasm. Participates in various redox reactions through the reversible oxidation of the active center dithiol to a disulfide. The H form is known to activate a number of cytosolic enzymes. The chain is Thioredoxin H-type (PEC-2) from Brassica campestris (Field mustard).